A 236-amino-acid polypeptide reads, in one-letter code: ATP-dependent dethiobiotin synthetase BioD (236 aa).

Residue T19 participates in Mg(2+) binding. K40 is a catalytic residue. Mg(2+)-binding residues include D61 and E122. ATP-binding positions include D61, 122–125 (EGVG), 182–183 (NT), and 211–213 (PRL).

The protein belongs to the dethiobiotin synthetase family. As to quaternary structure, homodimer. It depends on Mg(2+) as a cofactor.

Its subcellular location is the cytoplasm. The enzyme catalyses (7R,8S)-7,8-diammoniononanoate + CO2 + ATP = (4R,5S)-dethiobiotin + ADP + phosphate + 3 H(+). The protein operates within cofactor biosynthesis; biotin biosynthesis; biotin from 7,8-diaminononanoate: step 1/2. Functionally, catalyzes a mechanistically unusual reaction, the ATP-dependent insertion of CO2 between the N7 and N8 nitrogen atoms of 7,8-diaminopelargonic acid (DAPA, also called 7,8-diammoniononanoate) to form a ureido ring. This is ATP-dependent dethiobiotin synthetase BioD from Janthinobacterium sp. (strain Marseille) (Minibacterium massiliensis).